Reading from the N-terminus, the 410-residue chain is NADH-quinone oxidoreductase subunit H (410 aa).

A run of 9 helical transmembrane segments spans residues 16–36 (LILAKSLGVFVFLLLTVLAAI), 84–104 (WIYLAAPVISVIPAFMAFAVI), 124–144 (LPVAVLYILAVTSIGVYGIVL), 165–185 (VISYEIAMALSFVAVFIYAGT), 198–218 (VWFIFLLLPSFLVYLTSMVGE), 260–280 (VSALATTLFLGGWHAPWPISI), 288–308 (WWPLLWFTAKVWLFLFFFMWL), 320–340 (FMRLGWKLLIPVSLAWIAIVA), and 353–373 (WVTALIGVAGVAAILASLLAW). The segment at 384 to 410 (SHSPPAQSSDHGAFPVPPLPVKEPADA) is disordered.

This sequence belongs to the complex I subunit 1 family. NDH-1 is composed of 14 different subunits. Subunits NuoA, H, J, K, L, M, N constitute the membrane sector of the complex.

Its subcellular location is the cell membrane. It catalyses the reaction a quinone + NADH + 5 H(+)(in) = a quinol + NAD(+) + 4 H(+)(out). NDH-1 shuttles electrons from NADH, via FMN and iron-sulfur (Fe-S) centers, to quinones in the respiratory chain. The immediate electron acceptor for the enzyme in this species is believed to be menaquinone. Couples the redox reaction to proton translocation (for every two electrons transferred, four hydrogen ions are translocated across the cytoplasmic membrane), and thus conserves the redox energy in a proton gradient. The chain is NADH-quinone oxidoreductase subunit H from Mycolicibacterium gilvum (strain PYR-GCK) (Mycobacterium gilvum (strain PYR-GCK)).